The following is an 89-amino-acid chain: Small ribosomal subunit protein uS15 (89 aa).

Belongs to the universal ribosomal protein uS15 family. Part of the 30S ribosomal subunit. Forms a bridge to the 50S subunit in the 70S ribosome, contacting the 23S rRNA.

In terms of biological role, one of the primary rRNA binding proteins, it binds directly to 16S rRNA where it helps nucleate assembly of the platform of the 30S subunit by binding and bridging several RNA helices of the 16S rRNA. Functionally, forms an intersubunit bridge (bridge B4) with the 23S rRNA of the 50S subunit in the ribosome. The polypeptide is Small ribosomal subunit protein uS15 (Desulforapulum autotrophicum (strain ATCC 43914 / DSM 3382 / VKM B-1955 / HRM2) (Desulfobacterium autotrophicum)).